We begin with the raw amino-acid sequence, 227 residues long: 2,3-bisphosphoglycerate-dependent phosphoglycerate mutase (227 aa).

Residues 7 to 14, 20 to 21, Arg59, 86 to 89, Lys97, 113 to 114, and 182 to 183 contribute to the substrate site; these read RHGFSEWN, TG, ERHY, RR, and GN. His8 (tele-phosphohistidine intermediate) is an active-site residue. The Proton donor/acceptor role is filled by Glu86.

It belongs to the phosphoglycerate mutase family. BPG-dependent PGAM subfamily. As to quaternary structure, homodimer.

It carries out the reaction (2R)-2-phosphoglycerate = (2R)-3-phosphoglycerate. The protein operates within carbohydrate degradation; glycolysis; pyruvate from D-glyceraldehyde 3-phosphate: step 3/5. Its function is as follows. Catalyzes the interconversion of 2-phosphoglycerate and 3-phosphoglycerate. The polypeptide is 2,3-bisphosphoglycerate-dependent phosphoglycerate mutase (Histophilus somni (strain 129Pt) (Haemophilus somnus)).